The chain runs to 108 residues: uncharacterized protein (108 aa).

The disordered stretch occupies residues 74–108; sequence TGSKKRDSKANSRSRPSGTITSRGARIGLQGYKSH. The span at 84–95 shows a compositional bias: polar residues; it reads NSRSRPSGTITS.

This is an uncharacterized protein from Saccharomyces cerevisiae (strain ATCC 204508 / S288c) (Baker's yeast).